Here is a 539-residue protein sequence, read N- to C-terminus: CTP synthase (539 aa).

Residues 1-268 (MSFKSIFLTG…SDFLLNKLGF (268 aa)) are amidoligase domain. Residue S14 coordinates CTP. S14 is a binding site for UTP. 15–20 (SLGKGL) is an ATP binding site. Y55 lines the L-glutamine pocket. D72 lines the ATP pocket. 2 residues coordinate Mg(2+): D72 and E142. Residues 149 to 151 (DIE), 188 to 193 (KTKPTQ), and K224 each bind CTP. UTP-binding positions include 188–193 (KTKPTQ) and K224. L242 lines the ATP pocket. In terms of domain architecture, Glutamine amidotransferase type-1 spans 294–532 (RIGLVGKYLE…IRAAKAYSLE (239 aa)). Residue G353 coordinates L-glutamine. The active-site Nucleophile; for glutamine hydrolysis is the C380. L-glutamine contacts are provided by residues 381-384 (LGMQ), E404, and R460. Residues H505 and E507 contribute to the active site.

Belongs to the CTP synthase family. As to quaternary structure, homotetramer.

It catalyses the reaction UTP + L-glutamine + ATP + H2O = CTP + L-glutamate + ADP + phosphate + 2 H(+). The enzyme catalyses L-glutamine + H2O = L-glutamate + NH4(+). It carries out the reaction UTP + NH4(+) + ATP = CTP + ADP + phosphate + 2 H(+). The protein operates within pyrimidine metabolism; CTP biosynthesis via de novo pathway; CTP from UDP: step 2/2. Its activity is regulated as follows. Allosterically activated by GTP, when glutamine is the substrate; GTP has no effect on the reaction when ammonia is the substrate. The allosteric effector GTP functions by stabilizing the protein conformation that binds the tetrahedral intermediate(s) formed during glutamine hydrolysis. Inhibited by the product CTP, via allosteric rather than competitive inhibition. Catalyzes the ATP-dependent amination of UTP to CTP with either L-glutamine or ammonia as the source of nitrogen. May be involved in lipopolysaccharide biosynthesis, potentially channelling CTP directly to CMP-KDO synthetase. Regulates intracellular CTP levels through interactions with the four ribonucleotide triphosphates. This chain is CTP synthase, found in Chlamydia trachomatis serovar D (strain ATCC VR-885 / DSM 19411 / UW-3/Cx).